An 82-amino-acid polypeptide reads, in one-letter code: Putative antimicrobial peptide 7848 (82 aa).

Residues 1–17 (MNENLWAAPAPKKLSKH) form the signal peptide. The tract at residues 16–60 (KHFFGRGGPLGKETGPNLFPKKPGAGKGLGFPPTKKPRGQPRVLK) is disordered. Residues 38-82 (PGAGKGLGFPPTKKPRGQPRVLKKPKWNSEGLIGILHRGSDGVQF) constitute a propeptide that is removed on maturation. A compositionally biased stretch (basic residues) spans 50–60 (KKPRGQPRVLK).

This sequence belongs to the non-disulfide-bridged peptide (NDBP) superfamily. Short antimicrobial peptide (group 4) family. As to expression, expressed by the venom gland.

The protein resides in the secreted. The protein is Putative antimicrobial peptide 7848 of Urodacus yaschenkoi (Inland robust scorpion).